Consider the following 397-residue polypeptide: Elongation factor Tu (397 aa).

The region spanning 10–207 (KPHVNIGTIG…AVDTYIEEPK (198 aa)) is the tr-type G domain. Positions 19–26 (GHVDHGKT) are G1. 19 to 26 (GHVDHGKT) serves as a coordination point for GTP. T26 contributes to the Mg(2+) binding site. Residues 60 to 64 (GITIN) are G2. The G3 stretch occupies residues 81 to 84 (DCPG). Residues 81-85 (DCPGH) and 136-139 (NKID) contribute to the GTP site. Residues 136-139 (NKID) form a G4 region. Positions 177–179 (SAL) are G5.

The protein belongs to the TRAFAC class translation factor GTPase superfamily. Classic translation factor GTPase family. EF-Tu/EF-1A subfamily. As to quaternary structure, monomer.

It is found in the cytoplasm. It catalyses the reaction GTP + H2O = GDP + phosphate + H(+). GTP hydrolase that promotes the GTP-dependent binding of aminoacyl-tRNA to the A-site of ribosomes during protein biosynthesis. In Metamycoplasma hominis (strain ATCC 23114 / DSM 25592 / NBRC 14850 / NCTC 10111 / PG21) (Mycoplasma hominis), this protein is Elongation factor Tu.